Consider the following 576-residue polypeptide: Arginine--tRNA ligase (576 aa).

The 'HIGH' region motif lies at 122–132; the sequence is PNVAKEMHVGH.

It belongs to the class-I aminoacyl-tRNA synthetase family. As to quaternary structure, monomer.

The protein localises to the cytoplasm. The catalysed reaction is tRNA(Arg) + L-arginine + ATP = L-arginyl-tRNA(Arg) + AMP + diphosphate. This is Arginine--tRNA ligase from Photobacterium profundum (strain SS9).